Here is a 108-residue protein sequence, read N- to C-terminus: Thioredoxin C-2 (108 aa).

Residues 2–108 (SATIVNTTDE…KLAAFIDQNI (107 aa)) form the Thioredoxin domain. A disulfide bond links cysteine 33 and cysteine 36.

Belongs to the thioredoxin family.

Functionally, participates in various redox reactions through the reversible oxidation of its active center dithiol to a disulfide and catalyzes dithiol-disulfide exchange reactions. This Corynebacterium nephridii protein is Thioredoxin C-2.